Consider the following 128-residue polypeptide: UPF0325 protein PMI2289 (128 aa).

Belongs to the UPF0325 family.

The protein is UPF0325 protein PMI2289 of Proteus mirabilis (strain HI4320).